The chain runs to 533 residues: MNDFWQHCSALLERELTPQQYVTWIKPLAPVAFDAAANTLSIAAPNRFKLDWVKSQFSGRISDLARDFWNAPIEVQFVLDPKAGQRSPAGATPLAPRAPLPSANPAPVGPGPACAPAVDAHAPAPAGMNAATAAAVAAAQAAQAAQANAAALNADEAADLDLPSLTAHEAAAGRRTWRPGAANANSEAADSMYERSKLNPVLTFDNFVTGKANQLARAAAIQVADNPGISYNPLFLYGGVGLGKTHLIHAIGNQLLLDKPGARIRYIHAEQYVSDVVKAYQRKAFDDFKRYYHSLDLLLIDDIQFFSGKSRTQEEFFYAFEALVANKAQVIITSDTYPKEISGIDDRLISRFDSGLTVAIEPPELEMRVAILMRKAQSEGVSLSEDVAFFVAKHLRSNVRELEGALRKILAYSKFHGREITIELTKEALKDLLTVQNRQISVENIQKTVADFYNIKVADMYSKKRPANIARPRQIAMYLAKELTQKSLPEIGELFGGRDHTTVLHAVRKIADERGKDAQLNHELHVLEQTLKG.

The interval 1–72 (MNDFWQHCSA…DLARDFWNAP (72 aa)) is domain I, interacts with DnaA modulators. The tract at residues 72–196 (PIEVQFVLDP…EAADSMYERS (125 aa)) is domain II. The interval 83–110 (AGQRSPAGATPLAPRAPLPSANPAPVGP) is disordered. The span at 96–110 (PRAPLPSANPAPVGP) shows a compositional bias: pro residues. A domain III, AAA+ region region spans residues 197-413 (KLNPVLTFDN…GALRKILAYS (217 aa)). ATP is bound by residues Gly-241, Gly-243, Lys-244, and Thr-245. Residues 414–533 (KFHGREITIE…LHVLEQTLKG (120 aa)) form a domain IV, binds dsDNA region.

It belongs to the DnaA family. Oligomerizes as a right-handed, spiral filament on DNA at oriC.

Its subcellular location is the cytoplasm. Functionally, plays an essential role in the initiation and regulation of chromosomal replication. ATP-DnaA binds to the origin of replication (oriC) to initiate formation of the DNA replication initiation complex once per cell cycle. Binds the DnaA box (a 9 base pair repeat at the origin) and separates the double-stranded (ds)DNA. Forms a right-handed helical filament on oriC DNA; dsDNA binds to the exterior of the filament while single-stranded (ss)DNA is stabiized in the filament's interior. The ATP-DnaA-oriC complex binds and stabilizes one strand of the AT-rich DNA unwinding element (DUE), permitting loading of DNA polymerase. After initiation quickly degrades to an ADP-DnaA complex that is not apt for DNA replication. Binds acidic phospholipids. In Burkholderia mallei (strain NCTC 10247), this protein is Chromosomal replication initiator protein DnaA.